The primary structure comprises 96 residues: uncharacterized protein (96 aa).

2 consecutive transmembrane segments (helical) span residues 27–47 (LYTV…FFFF) and 52–72 (MSAG…RPTI).

It is found in the cell membrane. This is an uncharacterized protein from Bacillus subtilis (strain 168).